Here is a 659-residue protein sequence, read N- to C-terminus: Centrosomal protein of 76 kDa (659 aa).

2 positions are modified to phosphoserine: serine 75 and serine 83.

It belongs to the CEP76 family. In terms of assembly, interacts with CCP110 and CEP97.

It is found in the cytoplasm. The protein resides in the cytoskeleton. It localises to the microtubule organizing center. The protein localises to the centrosome. Its subcellular location is the centriole. Centrosomal protein involved in regulation of centriole duplication. Required to limit centriole duplication to once per cell cycle by preventing centriole reduplication. The protein is Centrosomal protein of 76 kDa (CEP76) of Homo sapiens (Human).